Reading from the N-terminus, the 100-residue chain is Small ribosomal subunit protein uS14m (100 aa).

The protein belongs to the universal ribosomal protein uS14 family.

It localises to the mitochondrion. The polypeptide is Small ribosomal subunit protein uS14m (RPS14) (Brassica napus (Rape)).